A 360-amino-acid polypeptide reads, in one-letter code: Probable cinnamyl alcohol dehydrogenase 6 (360 aa).

Cys48 provides a ligand contact to Zn(2+). Residue Thr50 participates in NADP(+) binding. Zn(2+)-binding residues include His70, Glu71, Cys101, Cys104, Cys107, Cys115, and Cys164. Residues Thr168, 192 to 197 (GLGGLG), 215 to 220 (STSPAK), Thr255, Gly279, and 302 to 304 (SMT) each bind NADP(+).

It belongs to the zinc-containing alcohol dehydrogenase family. Homodimer. The cofactor is Zn(2+).

It carries out the reaction (E)-cinnamyl alcohol + NADP(+) = (E)-cinnamaldehyde + NADPH + H(+). The catalysed reaction is (E)-coniferol + NADP(+) = (E)-coniferaldehyde + NADPH + H(+). The enzyme catalyses (E)-sinapyl alcohol + NADP(+) = (E)-sinapaldehyde + NADPH + H(+). It catalyses the reaction (E)-4-coumaroyl alcohol + NADP(+) = (E)-4-coumaraldehyde + NADPH + H(+). It carries out the reaction (E)-caffeyl alcohol + NADP(+) = (E)-caffeyl aldehyde + NADPH + H(+). Its pathway is aromatic compound metabolism; phenylpropanoid biosynthesis. In terms of biological role, involved in lignin biosynthesis. Catalyzes the final step specific for the production of lignin monomers. Catalyzes the NADPH-dependent reduction of coniferaldehyde, 5-hydroxyconiferaldehyde, sinapaldehyde, 4-coumaraldehyde and caffeyl aldehyde to their respective alcohols. The chain is Probable cinnamyl alcohol dehydrogenase 6 from Oryza sativa subsp. japonica (Rice).